The primary structure comprises 831 residues: Periplasmic nitrate reductase (831 aa).

Residues 1 to 31 (MKLSRRDFMKANAAVAAAAAAGLTIPTVAKA) constitute a signal peptide (tat-type signal). The region spanning 40-96 (IKWDKAPCRFCGTGCGVLVGTQNGRIVASQGDPDSPVNRGLNCVKGYFLPKIMYGKD) is the 4Fe-4S Mo/W bis-MGD-type domain. [4Fe-4S] cluster is bound by residues cysteine 47, cysteine 50, cysteine 54, and cysteine 82. Residues lysine 84, glutamine 151, asparagine 176, cysteine 180, 213–220 (WGSNMAEM), 244–248 (STFEH), 263–265 (QTD), methionine 373, glutamine 377, asparagine 483, 509–510 (SD), lysine 532, aspartate 559, and 719–728 (TGRVLEHWHT) contribute to the Mo-bis(molybdopterin guanine dinucleotide) site. Residue phenylalanine 795 coordinates substrate. The Mo-bis(molybdopterin guanine dinucleotide) site is built by asparagine 803 and lysine 820.

It belongs to the prokaryotic molybdopterin-containing oxidoreductase family. NasA/NapA/NarB subfamily. Component of the periplasmic nitrate reductase NapAB complex composed of NapA and NapB. It depends on [4Fe-4S] cluster as a cofactor. Mo-bis(molybdopterin guanine dinucleotide) is required as a cofactor. Predicted to be exported by the Tat system. The position of the signal peptide cleavage has not been experimentally proven.

Its subcellular location is the periplasm. The catalysed reaction is 2 Fe(II)-[cytochrome] + nitrate + 2 H(+) = 2 Fe(III)-[cytochrome] + nitrite + H2O. Functionally, catalytic subunit of the periplasmic nitrate reductase complex NapAB. Receives electrons from NapB and catalyzes the reduction of nitrate to nitrite. This Yersinia enterocolitica serotype O:8 / biotype 1B (strain NCTC 13174 / 8081) protein is Periplasmic nitrate reductase.